The primary structure comprises 426 residues: Glutamate-1-semialdehyde 2,1-aminomutase (426 aa).

N6-(pyridoxal phosphate)lysine is present on Lys265.

It belongs to the class-III pyridoxal-phosphate-dependent aminotransferase family. HemL subfamily. In terms of assembly, homodimer. Requires pyridoxal 5'-phosphate as cofactor.

Its subcellular location is the cytoplasm. It carries out the reaction (S)-4-amino-5-oxopentanoate = 5-aminolevulinate. It participates in porphyrin-containing compound metabolism; protoporphyrin-IX biosynthesis; 5-aminolevulinate from L-glutamyl-tRNA(Glu): step 2/2. This is Glutamate-1-semialdehyde 2,1-aminomutase from Salmonella heidelberg (strain SL476).